A 193-amino-acid chain; its full sequence is Dual-action ribosomal maturation protein DarP (193 aa).

Positions 1 to 10 are enriched in basic and acidic residues; sequence MRGRDEDTGE. Disordered regions lie at residues 1-20 and 170-193; these read MRGRDEDTGEFRGASRSQQR and SQKPGLESGDAGLEDEESASENDE. The segment covering 181 to 193 has biased composition (acidic residues); it reads GLEDEESASENDE.

This sequence belongs to the DarP family.

Its subcellular location is the cytoplasm. In terms of biological role, member of a network of 50S ribosomal subunit biogenesis factors which assembles along the 30S-50S interface, preventing incorrect 23S rRNA structures from forming. Promotes peptidyl transferase center (PTC) maturation. The chain is Dual-action ribosomal maturation protein DarP from Xanthomonas campestris pv. campestris (strain 8004).